Here is a 248-residue protein sequence, read N- to C-terminus: Adenosylcobinamide-GDP ribazoletransferase (248 aa).

7 helical membrane-spanning segments follow: residues 24-44, 70-90, 106-126, 134-154, 168-188, 189-209, and 228-248; these read EINL…IGAW, VIIT…GLFS, VGAN…ALFL, ICWL…LLFA, IFLG…LAVL, GLFF…FTII, and AGGQ…WGLV.

This sequence belongs to the CobS family. It depends on Mg(2+) as a cofactor.

The protein resides in the cell membrane. The enzyme catalyses alpha-ribazole + adenosylcob(III)inamide-GDP = adenosylcob(III)alamin + GMP + H(+). The catalysed reaction is alpha-ribazole 5'-phosphate + adenosylcob(III)inamide-GDP = adenosylcob(III)alamin 5'-phosphate + GMP + H(+). It functions in the pathway cofactor biosynthesis; adenosylcobalamin biosynthesis; adenosylcobalamin from cob(II)yrinate a,c-diamide: step 7/7. In terms of biological role, joins adenosylcobinamide-GDP and alpha-ribazole to generate adenosylcobalamin (Ado-cobalamin). Also synthesizes adenosylcobalamin 5'-phosphate from adenosylcobinamide-GDP and alpha-ribazole 5'-phosphate. The sequence is that of Adenosylcobinamide-GDP ribazoletransferase from Listeria monocytogenes serovar 1/2a (strain ATCC BAA-679 / EGD-e).